The following is a 252-amino-acid chain: Oncostatin-M (252 aa).

The N-terminal stretch at 1–25 (MGVLLTQRTLLSLVLALLFPSMASM) is a signal peptide. Cystine bridges form between C31–C152 and C74–C192. The N-linked (GlcNAc...) asparagine glycan is linked to N100. Disordered stretches follow at residues 162 to 184 (TAEP…ASDA) and 213 to 252 (GESP…QLPR). A glycan (N-linked (GlcNAc...) asparagine) is linked at N217. The span at 218-245 (RSRRHSPHQALRKGVRRTRPSRKGKRLM) shows a compositional bias: basic residues. The propeptide occupies 222-252 (HSPHQALRKGVRRTRPSRKGKRLMTRGQLPR).

It belongs to the LIF/OSM family. Post-translationally, propeptide processing is not important for receptor binding activity but may be important growth-inhibitory activity.

The protein resides in the secreted. In terms of biological role, growth regulator. Inhibits the proliferation of a number of tumor cell lines. Stimulates proliferation of AIDS-KS cells. It regulates cytokine production, including IL-6, G-CSF and GM-CSF from endothelial cells. Uses both type I OSM receptor (heterodimers composed of LIFR and IL6ST) and type II OSM receptor (heterodimers composed of OSMR and IL6ST). Involved in the maturation of fetal hepatocytes, thereby promoting liver development and regeneration. This is Oncostatin-M (OSM) from Homo sapiens (Human).